Consider the following 127-residue polypeptide: Small ribosomal subunit protein uS12m (127 aa).

This sequence belongs to the universal ribosomal protein uS12 family.

It is found in the mitochondrion. Its function is as follows. Protein S12 is involved in the translation initiation step. This Chondrus crispus (Carrageen Irish moss) protein is Small ribosomal subunit protein uS12m (RPS12).